The chain runs to 358 residues: Dynein axonemal assembly factor 10 (358 aa).

6 WD repeats span residues 63–105, 109–154, 162–205, 207–249, 258–298, and 320–358; these read EKKH…QPVF, AHAS…APVA, NNVR…VRWE, NVRN…PKKG, TAGA…QRKV, and ISTQPVAGFDWSPDKEGLFACVAFDQAVRVGIVTKLNKV.

As to quaternary structure, interacts with PIH1D1; the interaction associates DNAAF10 with the R2TP complex. Interacts with several dynein axonemal assembly factors.

It is found in the dynein axonemal particle. In terms of biological role, key assembly factor specifically required for the stability of axonemal dynein heavy chains in cytoplasm. The protein is Dynein axonemal assembly factor 10 (dnaaf10) of Chlamydomonas reinhardtii (Chlamydomonas smithii).